The primary structure comprises 456 residues: 26S proteasome non-ATPase regulatory subunit 12 (456 aa).

An N-acetylalanine modification is found at Ala2. A Glycyl lysine isopeptide (Lys-Gly) (interchain with G-Cter in SUMO1); alternate cross-link involves residue Lys92. Residue Lys92 forms a Glycyl lysine isopeptide (Lys-Gly) (interchain with G-Cter in SUMO2); alternate linkage. Residues Lys221 and Lys368 each carry the N6-acetyllysine modification. Residues 242–420 form the PCI domain; it reads SICKHYRAIY…GIINFQRPKD (179 aa).

It belongs to the proteasome subunit p55 family. As to quaternary structure, component of the 19S proteasome regulatory particle complex. The 26S proteasome consists of a 20S core particle (CP) and two 19S regulatory subunits (RP). The regulatory particle is made of a lid composed of 9 subunits including PSMD12, a base containing 6 ATPases and few additional components. Interacts with ERCC6.

In terms of biological role, component of the 26S proteasome, a multiprotein complex involved in the ATP-dependent degradation of ubiquitinated proteins. This complex plays a key role in the maintenance of protein homeostasis by removing misfolded or damaged proteins, which could impair cellular functions, and by removing proteins whose functions are no longer required. Therefore, the proteasome participates in numerous cellular processes, including cell cycle progression, apoptosis, or DNA damage repair. The polypeptide is 26S proteasome non-ATPase regulatory subunit 12 (PSMD12) (Pongo abelii (Sumatran orangutan)).